A 273-amino-acid chain; its full sequence is 2,3,4,5-tetrahydropyridine-2,6-dicarboxylate N-succinyltransferase (273 aa).

Substrate contacts are provided by Arg-105 and Asp-142.

Belongs to the transferase hexapeptide repeat family. In terms of assembly, homotrimer.

The protein resides in the cytoplasm. It carries out the reaction (S)-2,3,4,5-tetrahydrodipicolinate + succinyl-CoA + H2O = (S)-2-succinylamino-6-oxoheptanedioate + CoA. It functions in the pathway amino-acid biosynthesis; L-lysine biosynthesis via DAP pathway; LL-2,6-diaminopimelate from (S)-tetrahydrodipicolinate (succinylase route): step 1/3. This is 2,3,4,5-tetrahydropyridine-2,6-dicarboxylate N-succinyltransferase from Bordetella avium (strain 197N).